The following is a 471-amino-acid chain: Putative F-box protein At5g36200 (471 aa).

In terms of domain architecture, F-box spans Met-1–Leu-46.

In Arabidopsis thaliana (Mouse-ear cress), this protein is Putative F-box protein At5g36200.